The sequence spans 59 residues: Large ribosomal subunit protein uL30 (59 aa).

It belongs to the universal ribosomal protein uL30 family. In terms of assembly, part of the 50S ribosomal subunit.

This chain is Large ribosomal subunit protein uL30, found in Clostridium botulinum (strain 657 / Type Ba4).